The following is a 61-amino-acid chain: Temporin-1Tb (61 aa).

The N-terminal stretch at M1–C22 is a signal peptide. Residues E23–E44 constitute a propeptide that is removed on maturation. L59 is subject to Leucine amide.

The protein belongs to the frog skin active peptide (FSAP) family. Temporin subfamily. In terms of assembly, homo-oligomerizes in membranes as homodimers, homotrimers, or even homotetramers. Oligomerizes in presence of LPS. In Gram-positive bacterial mimetic membranes, the aggregation is weakly pronounced, and penetration proceeds more rapidly and is deeper than in Gram-negative bacterial mimetic membranes where aggregation is high. Homo-oligomerization is prevented by temporin-L. Expressed by the skin glands.

The protein resides in the secreted. Its subcellular location is the target cell membrane. It localises to the target cell. The protein localises to the target cell cytoplasm. Functionally, amphipathic alpha-helical antimicrobial peptide with potent activity against Gram-positive bacteria, weak activity against Gram-negative bacteria, and moderate activity against fungi. Mainly acts by causing membrane permeabilization, but is unable to forme pore-like openings. Is also able to penetrate eukaryotic cells (keratinocytes), and kill intracellular S.aureus (both wild-type and MRSA) without injuring host cells. Shows inhibitory effect on biofilm formation of Gram-positive bacteria, but not of Gram-negative bacteria. Shows antiviral activity against herpes simplex virus 1 (HSV-1) by disrupting the viral envelope. Also displays anti-leishmania activity by damaging parasite membrane. Does not show hemolytic activity. Acts synergistically with temporin-L that improves temporin-1Tb activity by preventing its self-association in lipopolysaccharides (LPS). In vitro, promotes cell migration and wound healing. The chain is Temporin-1Tb from Rana temporaria (European common frog).